The chain runs to 329 residues: 4-hydroxythreonine-4-phosphate dehydrogenase (329 aa).

The substrate site is built by His-136 and Thr-137. His-166, His-211, and His-266 together coordinate a divalent metal cation. 3 residues coordinate substrate: Lys-274, Asn-283, and Arg-292.

It belongs to the PdxA family. As to quaternary structure, homodimer. Zn(2+) is required as a cofactor. The cofactor is Mg(2+). Requires Co(2+) as cofactor.

It is found in the cytoplasm. The enzyme catalyses 4-(phosphooxy)-L-threonine + NAD(+) = 3-amino-2-oxopropyl phosphate + CO2 + NADH. It participates in cofactor biosynthesis; pyridoxine 5'-phosphate biosynthesis; pyridoxine 5'-phosphate from D-erythrose 4-phosphate: step 4/5. Catalyzes the NAD(P)-dependent oxidation of 4-(phosphooxy)-L-threonine (HTP) into 2-amino-3-oxo-4-(phosphooxy)butyric acid which spontaneously decarboxylates to form 3-amino-2-oxopropyl phosphate (AHAP). This chain is 4-hydroxythreonine-4-phosphate dehydrogenase, found in Shigella dysenteriae serotype 1 (strain Sd197).